The chain runs to 441 residues: Ribosomal protein uS12 methylthiotransferase RimO (441 aa).

The MTTase N-terminal domain occupies 5–116 (PTIAFTHLGC…IVDVMQRVEK (112 aa)). Residues Cys-14, Cys-50, Cys-79, Cys-154, Cys-158, and Cys-161 each coordinate [4Fe-4S] cluster. Residues 140-370 (TTSEGVAYVR…EVQQSISWQQ (231 aa)) form the Radical SAM core domain. The TRAM domain maps to 372-438 (QKLVGQLVDV…IYDLYGCLIS (67 aa)).

Belongs to the methylthiotransferase family. RimO subfamily. It depends on [4Fe-4S] cluster as a cofactor.

It is found in the cytoplasm. It carries out the reaction L-aspartate(89)-[ribosomal protein uS12]-hydrogen + (sulfur carrier)-SH + AH2 + 2 S-adenosyl-L-methionine = 3-methylsulfanyl-L-aspartate(89)-[ribosomal protein uS12]-hydrogen + (sulfur carrier)-H + 5'-deoxyadenosine + L-methionine + A + S-adenosyl-L-homocysteine + 2 H(+). Functionally, catalyzes the methylthiolation of an aspartic acid residue of ribosomal protein uS12. This chain is Ribosomal protein uS12 methylthiotransferase RimO, found in Trichodesmium erythraeum (strain IMS101).